Consider the following 278-residue polypeptide: UPF0761 membrane protein NT05HA_1801 (278 aa).

A run of 6 helical transmembrane segments spans residues 32–52, 88–108, 123–143, 168–188, 203–223, and 232–252; these read MLAI…FPVF, QMSA…INSI, PIFT…LLVG, LLSF…YMVV, LIAA…IVTF, and AMAT…FVLL.

The protein belongs to the UPF0761 family.

The protein resides in the cell inner membrane. The sequence is that of UPF0761 membrane protein NT05HA_1801 from Aggregatibacter aphrophilus (strain NJ8700) (Haemophilus aphrophilus).